A 375-amino-acid polypeptide reads, in one-letter code: tRNA-specific 2-thiouridylase MnmA 3 (375 aa).

ATP contacts are provided by residues 11 to 18 and Met37; that span reads GMSGGIDS. The active-site Nucleophile is Cys104. Cys104 and Cys201 are joined by a disulfide. Residue Gly128 coordinates ATP. The interval 150–152 is interaction with tRNA; it reads KDQ. The active-site Cysteine persulfide intermediate is the Cys201. The interval 309 to 310 is interaction with tRNA; that stretch reads RY.

The protein belongs to the MnmA/TRMU family.

It is found in the cytoplasm. The catalysed reaction is S-sulfanyl-L-cysteinyl-[protein] + uridine(34) in tRNA + AH2 + ATP = 2-thiouridine(34) in tRNA + L-cysteinyl-[protein] + A + AMP + diphosphate + H(+). In terms of biological role, catalyzes the 2-thiolation of uridine at the wobble position (U34) of tRNA, leading to the formation of s(2)U34. In Phocaeicola vulgatus (strain ATCC 8482 / DSM 1447 / JCM 5826 / CCUG 4940 / NBRC 14291 / NCTC 11154) (Bacteroides vulgatus), this protein is tRNA-specific 2-thiouridylase MnmA 3.